The chain runs to 282 residues: Bifunctional protein FolD (282 aa).

Residues 165–167 and isoleucine 231 each bind NADP(+); that span reads GAS.

It belongs to the tetrahydrofolate dehydrogenase/cyclohydrolase family. In terms of assembly, homodimer.

The enzyme catalyses (6R)-5,10-methylene-5,6,7,8-tetrahydrofolate + NADP(+) = (6R)-5,10-methenyltetrahydrofolate + NADPH. The catalysed reaction is (6R)-5,10-methenyltetrahydrofolate + H2O = (6R)-10-formyltetrahydrofolate + H(+). It participates in one-carbon metabolism; tetrahydrofolate interconversion. Functionally, catalyzes the oxidation of 5,10-methylenetetrahydrofolate to 5,10-methenyltetrahydrofolate and then the hydrolysis of 5,10-methenyltetrahydrofolate to 10-formyltetrahydrofolate. The sequence is that of Bifunctional protein FolD from Francisella tularensis subsp. mediasiatica (strain FSC147).